Reading from the N-terminus, the 211-residue chain is Sec-independent protein translocase protein TatB (211 aa).

The helical transmembrane segment at 1-21 threads the bilayer; that stretch reads MFDIGVGELTLIAVVALVVLG. The interval 175–211 is disordered; the sequence is AHLTSAPAPPVTVAPVDAGTSASPTPSEPTKIQEKQP. Positions 194–204 are enriched in polar residues; sequence TSASPTPSEPT.

This sequence belongs to the TatB family. The Tat system comprises two distinct complexes: a TatABC complex, containing multiple copies of TatA, TatB and TatC subunits, and a separate TatA complex, containing only TatA subunits. Substrates initially bind to the TatABC complex, which probably triggers association of the separate TatA complex to form the active translocon.

The protein resides in the cell inner membrane. Its function is as follows. Part of the twin-arginine translocation (Tat) system that transports large folded proteins containing a characteristic twin-arginine motif in their signal peptide across membranes. Together with TatC, TatB is part of a receptor directly interacting with Tat signal peptides. TatB may form an oligomeric binding site that transiently accommodates folded Tat precursor proteins before their translocation. This is Sec-independent protein translocase protein TatB from Xanthomonas oryzae pv. oryzae (strain MAFF 311018).